The following is a 452-amino-acid chain: Probable glycine dehydrogenase (decarboxylating) subunit 1 (452 aa).

Belongs to the GcvP family. N-terminal subunit subfamily. The glycine cleavage system is composed of four proteins: P, T, L and H. In this organism, the P 'protein' is a heterodimer of two subunits.

The catalysed reaction is N(6)-[(R)-lipoyl]-L-lysyl-[glycine-cleavage complex H protein] + glycine + H(+) = N(6)-[(R)-S(8)-aminomethyldihydrolipoyl]-L-lysyl-[glycine-cleavage complex H protein] + CO2. The glycine cleavage system catalyzes the degradation of glycine. The P protein binds the alpha-amino group of glycine through its pyridoxal phosphate cofactor; CO(2) is released and the remaining methylamine moiety is then transferred to the lipoamide cofactor of the H protein. The polypeptide is Probable glycine dehydrogenase (decarboxylating) subunit 1 (Alcanivorax borkumensis (strain ATCC 700651 / DSM 11573 / NCIMB 13689 / SK2)).